Consider the following 393-residue polypeptide: Serine/threonine-protein phosphatase 2A activator 1 (393 aa).

A disordered region spans residues 328 to 393; sequence EKEEESIEQA…TSFSRDRLRR (66 aa). Composition is skewed to polar residues over residues 335-356 and 365-386; these read EQANAGSPGREQTSTRFPTSTS and SGNNINYLLSHQNQSHRNQTSF. Residue Ser341 is modified to Phosphoserine.

The protein belongs to the PTPA-type PPIase family. Interacts with the phosphatase PP2A-like catalytic subunits PPG1, PPH3 and SIT4. Forms a ternary complex with SIT4-TAP42.

The protein localises to the cytoplasm. It is found in the nucleus. It carries out the reaction [protein]-peptidylproline (omega=180) = [protein]-peptidylproline (omega=0). Functionally, PPIases accelerate the folding of proteins. It catalyzes the cis-trans isomerization of proline imidic peptide bonds in oligopeptides. Acts as a regulatory subunit for TAP42-associated PP2A-like phosphatases modulating their activity or substrate specificity, probably by inducing a conformational change in the catalytic subunit, a direct target of the PPIase. Can reactivate inactive phosphatase PP2A-phosphatase methylesterase complexes (PP2Ai) in presence of ATP and Mg(2+) by dissociating the inactive form from the complex. Involved in the regulation of cell cycle progression, mitotic spindle formation, bud morphogenesis and DNA repair. This chain is Serine/threonine-protein phosphatase 2A activator 1 (RRD1), found in Saccharomyces cerevisiae (strain ATCC 204508 / S288c) (Baker's yeast).